We begin with the raw amino-acid sequence, 557 residues long: Dihydroxy-acid dehydratase (557 aa).

Position 47 (cysteine 47) interacts with [2Fe-2S] cluster. Aspartate 79 contacts Mg(2+). Cysteine 120 contacts [2Fe-2S] cluster. Mg(2+) contacts are provided by aspartate 121 and lysine 122. An N6-carboxylysine modification is found at lysine 122. Cysteine 192 provides a ligand contact to [2Fe-2S] cluster. Mg(2+) is bound at residue glutamate 444. The active-site Proton acceptor is the serine 470.

This sequence belongs to the IlvD/Edd family. Homodimer. The cofactor is [2Fe-2S] cluster. Mg(2+) is required as a cofactor.

It catalyses the reaction (2R)-2,3-dihydroxy-3-methylbutanoate = 3-methyl-2-oxobutanoate + H2O. The catalysed reaction is (2R,3R)-2,3-dihydroxy-3-methylpentanoate = (S)-3-methyl-2-oxopentanoate + H2O. The protein operates within amino-acid biosynthesis; L-isoleucine biosynthesis; L-isoleucine from 2-oxobutanoate: step 3/4. It functions in the pathway amino-acid biosynthesis; L-valine biosynthesis; L-valine from pyruvate: step 3/4. Functionally, functions in the biosynthesis of branched-chain amino acids. Catalyzes the dehydration of (2R,3R)-2,3-dihydroxy-3-methylpentanoate (2,3-dihydroxy-3-methylvalerate) into 2-oxo-3-methylpentanoate (2-oxo-3-methylvalerate) and of (2R)-2,3-dihydroxy-3-methylbutanoate (2,3-dihydroxyisovalerate) into 2-oxo-3-methylbutanoate (2-oxoisovalerate), the penultimate precursor to L-isoleucine and L-valine, respectively. The sequence is that of Dihydroxy-acid dehydratase from Parasynechococcus marenigrum (strain WH8102).